We begin with the raw amino-acid sequence, 528 residues long: Probable histone-arginine methyltransferase CARM1 (528 aa).

Positions glutamate 149–serine 464 constitute an SAM-dependent MTase PRMT-type domain. Residues glutamine 166, arginine 175, glycine 199, glutamate 221, glutamate 251, and serine 279 each coordinate S-adenosyl-L-methionine. The segment covering tyrosine 500–leucine 520 has biased composition (low complexity). The tract at residues tyrosine 500–aspartate 528 is disordered.

This sequence belongs to the class I-like SAM-binding methyltransferase superfamily. Protein arginine N-methyltransferase family.

Its subcellular location is the nucleus. The protein localises to the cytoplasm. The enzyme catalyses L-arginyl-[protein] + 2 S-adenosyl-L-methionine = N(omega),N(omega)-dimethyl-L-arginyl-[protein] + 2 S-adenosyl-L-homocysteine + 2 H(+). Methylates (mono- and asymmetric dimethylation) the guanidino nitrogens of arginyl residues in several proteins involved in DNA packaging, transcription regulation, and mRNA stability. Recruited to promoters upon gene activation, methylates histone H3 and activates transcription via chromatin remodeling. This is Probable histone-arginine methyltransferase CARM1 (CARM1) from Oryza sativa subsp. indica (Rice).